The following is a 969-amino-acid chain: Rab3 GTPase-activating protein catalytic subunit (969 aa).

Residues 532–549 show a composition bias toward basic and acidic residues; it reads DDGKKSSSSDGARDRSRG. Positions 532 to 613 are disordered; it reads DDGKKSSSSD…PEGRLQPHGT (82 aa). Residues 550–572 are compositionally biased toward low complexity; it reads APEGAGPEGAGPAEAAGKSWDSW. Positions 573–589 are enriched in acidic residues; that stretch reads SDSEDEFFECVSDTEEM. Residues 590-608 show a composition bias toward basic and acidic residues; it reads KEDKEEAENRSRSKPEGRL.

Belongs to the Rab3-GAP catalytic subunit family. In terms of assembly, the Rab3 GTPase-activating complex is a heterodimer composed of rab3gap1 and rab3gap2. The Rab3 GTPase-activating complex interacts with DMXL2. Interacts with LMAN1.

It is found in the cytoplasm. The protein localises to the endoplasmic reticulum. It localises to the golgi apparatus. Its subcellular location is the cis-Golgi network. Its function is as follows. Catalytic subunit of the Rab3 GTPase-activating (Rab3GAP) complex composed of rab3gap1 and rab3gap2, which has GTPase-activating protein (GAP) activity towards various Rab3 subfamily members (RAB3A, RAB3B, RAB3C and RAB3D), RAB5A and RAB43, and guanine nucleotide exchange factor (GEF) activity towards RAB18. As part of the Rab3GAP complex, acts as a GAP for Rab3 proteins by converting active RAB3-GTP to the inactive form RAB3-GDP. Rab3 proteins are involved in regulated exocytosis of neurotransmitters and hormones. The Rab3GAP complex, acts as a GEF for RAB18 by promoting the conversion of inactive RAB18-GDP to the active form RAB18-GTP. Recruits and stabilizes RAB18 at the cis-Golgi membrane where RAB18 is most likely activated. Also involved in RAB18 recruitment at the endoplasmic reticulum (ER) membrane where it maintains proper ER structure. Required for normal eye and brain development. May participate in neurodevelopmental processes such as proliferation, migration and differentiation before synapse formation, and non-synaptic vesicular release of neurotransmitters. The sequence is that of Rab3 GTPase-activating protein catalytic subunit (rab3gap1) from Danio rerio (Zebrafish).